A 101-amino-acid polypeptide reads, in one-letter code: uncharacterized protein (101 aa).

Transmembrane regions (helical) follow at residues 3-23 (IIGS…AIIF) and 68-88 (VIVL…IIVI).

It localises to the cell membrane. This is an uncharacterized protein from Ureaplasma parvum serovar 3 (strain ATCC 700970).